Here is a 208-residue protein sequence, read N- to C-terminus: Large ribosomal subunit protein uL3 (208 aa).

Belongs to the universal ribosomal protein uL3 family. Part of the 50S ribosomal subunit. Forms a cluster with proteins L14 and L19.

Its function is as follows. One of the primary rRNA binding proteins, it binds directly near the 3'-end of the 23S rRNA, where it nucleates assembly of the 50S subunit. This chain is Large ribosomal subunit protein uL3, found in Desulfosudis oleivorans (strain DSM 6200 / JCM 39069 / Hxd3) (Desulfococcus oleovorans).